The sequence spans 396 residues: MSAEMTDLNFAEGRPLMGEKEDDITVLLQEYVTQEHDIETAHGIVHVTMCGTPKLNRPVILTYHDIGLNHKTCFNSLFNFEDMHEITQHFSVCHVDAPGQQEGAASFPAGYMYPSMDQLAEMLPGVVQQLGLKSIIGLGIGSGAYILTRFALNHPSMVEGLVLININPCAEGWMDWAATKISGWAHALPEMVISHLFSKDEVHSNPELVETYRQHILHDINQNNLQLFVKSYNSRRDLEIERPIPGSNTVTLKCPSLLVVGDSSPAVDAVVECNSKLDPTKTTLLKMSDCGGFPQVVQPAKLAEAFKYFVQGMGYMPAASMTRLMRSRTGSAASSSSQDGNRSRSHTNEGSRSRSQTGDGNRSRAHTGDGNRSRSHTDTNNVNSDHNTPKSMEVSC.

Positions 326–396 (RSRTGSAASS…NTPKSMEVSC (71 aa)) are disordered. Over residues 327–340 (SRTGSAASSSSQDG) the composition is skewed to low complexity. 4 consecutive repeat copies span residues 340-349 (GNRSRSHTNE), 350-359 (GSRSRSQTGD), 360-369 (GNRSRAHTGD), and 370-379 (GNRSRSHTDT). Residues 340–379 (GNRSRSHTNEGSRSRSQTGDGNRSRAHTGDGNRSRSHTDT) form a 4 X 10 AA tandem repeats of G-[NS]-R-S-R-[AS]-[HQ]-T-[DGN]-[DET] region. A compositionally biased stretch (basic and acidic residues) spans 366–377 (HTGDGNRSRSHT). Positions 378–390 (DTNNVNSDHNTPK) are enriched in polar residues.

It belongs to the NDRG family.

May be involved in pronephros development, after specification of the pronephros. This is Protein NDRG1-B (ndrg1-b) from Xenopus laevis (African clawed frog).